Here is a 1048-residue protein sequence, read N- to C-terminus: Ceruloplasmin (1048 aa).

An N-terminal signal peptide occupies residues 1-19 (MKIFLLCIFLILCGTSVWA). 3 Plastocyanin-like domains span residues 20–200 (KDKH…LIHC), 209–357 (KEKN…VQDC), and 370–554 (NVRH…MKIC). Residues Y55, G64, and Y67 each contribute to the Na(+) site. Positions 120 and 122 each coordinate Cu(2+). H120 lines the O2 pocket. K128 is a Ca(2+) binding site. N138 carries an N-linked (GlcNAc...) asparagine glycan. The Ca(2+) site is built by Q143, D146, and D147. C174 and C200 are disulfide-bonded. Residues H180 and H182 each coordinate Cu(2+). H180 contributes to the O2 binding site. The N-linked (GlcNAc...) asparagine glycan is linked to N227. Residue S256 participates in Na(+) binding. C276 and C357 are disulfide-bonded. Residues H295, C338, and H343 each contribute to the Cu(2+) site. Residues F408, G417, and Y420 each coordinate Na(+). C530 and C554 are disulfide-bonded. 2 N-linked (GlcNAc...) asparagine glycosylation sites follow: N556 and N582. One can recognise a Plastocyanin-like 4 domain in the interval 564–712 (RLKNVDKEFY…MKQKYTVSQC (149 aa)). S611 contacts Na(+). A disulfide bridge connects residues C631 and C712. Residues H650, C693, H698, and M703 each coordinate Cu(2+). The active-site Nucleophile; for glutathione peroxidase activity is the C693. The residue at position 716 (S716) is a Phosphoserine. 2 consecutive Plastocyanin-like domains span residues 724 to 894 (GERT…LIVC) and 902 to 1044 (SNPI…PNEE). Residue N756 is glycosylated (N-linked (GlcNAc...) asparagine). The Na(+) site is built by F761, G770, and Y773. C868 and C894 are joined by a disulfide. A glycan (N-linked (GlcNAc...) asparagine) is linked at N920. Residue S949 participates in Na(+) binding. Cu(2+) is bound by residues H977, H980, H982, H1022, C1023, H1024, H1028, and M1033. H980 and H982 together coordinate O2. H1024 provides a ligand contact to O2.

Belongs to the multicopper oxidase family. In terms of assembly, found in a complex with MPO and LTF; interacts directly with MPO and LTF, which allows Fe(3+) incorporation into LTF, activation of CP ferroxidase activity and protection of CP antioxidant properties by MPO. Requires Cu(2+) as cofactor. Expressed by the liver and secreted in plasma. Also expressed in the hypothalamus, spleen and uterus. No expression in the cortex, heart, intestine or kidney.

The protein localises to the secreted. The catalysed reaction is 4 Fe(2+) + O2 + 4 H(+) = 4 Fe(3+) + 2 H2O. The enzyme catalyses 4 Cu(+) + O2 + 4 H(+) = 4 Cu(2+) + 2 H2O. It carries out the reaction a hydroperoxide + 2 glutathione = an alcohol + glutathione disulfide + H2O. It catalyses the reaction 4 nitric oxide + O2 + 2 H2O = 4 nitrite + 4 H(+). The catalysed reaction is 2 glutathione + H2O2 = glutathione disulfide + 2 H2O. Multifunctional blue, copper-binding (6-7 atoms per molecule) glycoprotein. It has ferroxidase activity oxidizing Fe(2+) to Fe(3+) without releasing radical oxygen species. It is involved in iron transport across the cell membrane. Copper ions provide a large number of enzymatic activites. Oxidizes highly toxic ferrous ions to the ferric state for further incorporation onto apo-transferrins, catalyzes Cu(+) oxidation and promotes the oxidation of biogenic amines such as norepinephrin and serotonin. Provides Cu(2+) ions for the ascorbate-mediated deaminase degradation of the heparan sulfate chains of GPC1. Has glutathione peroxidase-like activity, can remove both hydrogen peroxide and lipid hydroperoxide in the presence of thiols. Also shows NO-oxidase and NO2 synthase activities that determine endocrine NO homeostasis. This chain is Ceruloplasmin (CP), found in Ovis aries (Sheep).